The primary structure comprises 981 residues: Ubiquitin carboxyl-terminal hydrolase 15 (981 aa).

The residue at position 2 (alanine 2) is an N-acetylalanine. A mediates interaction with SART3 region spans residues alanine 2–glycine 223. The region spanning alanine 7–valine 118 is the DUSP domain. The tract at residues glutamate 216 to threonine 237 is disordered. The residue at position 226 (threonine 226) is a Phosphothreonine. Over residues threonine 226 to threonine 237 the composition is skewed to polar residues. A phosphoserine mark is found at serine 229 and serine 242. Residues cysteine 289 to glutamine 933 enclose the USP domain. Cysteine 298 (nucleophile) is an active-site residue. Position 602 is a phosphothreonine (threonine 602). The interval glycine 629 to leucine 694 is disordered. Over residues methionine 656–serine 673 the composition is skewed to acidic residues. Residue histidine 891 is the Proton acceptor of the active site. Residues serine 952–asparagine 981 are disordered. Positions glutamate 960–asparagine 974 are enriched in acidic residues. Phosphoserine occurs at positions 961 and 965.

This sequence belongs to the peptidase C19 family. In terms of assembly, a homodimer structure has been reported; however it is unclear whether the protein form a homodimer in vivo. Identified in a complex with the COP9 signalosome complex (CSN). Interacts with SMAD1, SMAD2 and SMAD3; the interaction is direct. Forms a complex with SMURF2 and SMAD7. Interacts with TGFBR1. Interacts with SART3; the interaction is direct. May interact with RNF20 and RNF40. May interact with PRKN. Interacts with INCA1. (Microbial infection) Interacts with human papillomavirus type 16 protein E6. Post-translationally, phosphorylated. Phosphorylation protects against ubiquitination and subsequent degradation by the proteasome. Ubiquitinated, leading to degradation by the proteasome. Expressed in skeletal muscle, kidney, heart, placenta, liver, thymus, lung, and ovary, with little or no expression in other tissues.

The protein localises to the cytoplasm. It localises to the nucleus. It is found in the mitochondrion. The catalysed reaction is Thiol-dependent hydrolysis of ester, thioester, amide, peptide and isopeptide bonds formed by the C-terminal Gly of ubiquitin (a 76-residue protein attached to proteins as an intracellular targeting signal).. Functionally, hydrolase that removes conjugated ubiquitin from target proteins and regulates various pathways such as the TGF-beta receptor signaling, NF-kappa-B and RNF41/NRDP1-PRKN pathways. Acts as a key regulator of TGF-beta receptor signaling pathway, but the precise mechanism is still unclear: according to a report, acts by promoting deubiquitination of monoubiquitinated R-SMADs (SMAD1, SMAD2 and/or SMAD3), thereby alleviating inhibition of R-SMADs and promoting activation of TGF-beta target genes. According to another reports, regulates the TGF-beta receptor signaling pathway by mediating deubiquitination and stabilization of TGFBR1, leading to an enhanced TGF-beta signal. Able to mediate deubiquitination of monoubiquitinated substrates, 'Lys-27'-, 'Lys-48'- and 'Lys-63'-linked polyubiquitin chains. May also regulate gene expression and/or DNA repair through the deubiquitination of histone H2B. Acts as an inhibitor of mitophagy by counteracting the action of parkin (PRKN): hydrolyzes cleavage of 'Lys-48'- and 'Lys-63'-linked polyubiquitin chains attached by parkin on target proteins such as MFN2, thereby reducing parkin's ability to drive mitophagy. Acts as an associated component of COP9 signalosome complex (CSN) and regulates different pathways via this association: regulates NF-kappa-B by mediating deubiquitination of NFKBIA and deubiquitinates substrates bound to VCP. Involved in endosome organization by mediating deubiquitination of SQSTM1: ubiquitinated SQSTM1 forms a molecular bridge that restrains cognate vesicles in the perinuclear region and its deubiquitination releases target vesicles for fast transport into the cell periphery. Acts as a negative regulator of antifungal immunity by mediating 'Lys-27'-linked deubiquitination of CARD9, thereby inactivating CARD9. In terms of biological role, (Microbial infection) Protects APC and human papillomavirus type 16 protein E6 against degradation via the ubiquitin proteasome pathway. This is Ubiquitin carboxyl-terminal hydrolase 15 from Homo sapiens (Human).